Consider the following 178-residue polypeptide: Large ribosomal subunit protein uL5 (178 aa).

The protein belongs to the universal ribosomal protein uL5 family. Part of the 50S ribosomal subunit; contacts the 5S rRNA and probably tRNA. Forms a bridge to the 30S subunit in the 70S ribosome.

Functionally, this is one of the proteins that bind and probably mediate the attachment of the 5S RNA into the large ribosomal subunit, where it forms part of the central protuberance. In the 70S ribosome it contacts protein S13 of the 30S subunit (bridge B1b), connecting the 2 subunits; this bridge is implicated in subunit movement. May contact the P site tRNA; the 5S rRNA and some of its associated proteins might help stabilize positioning of ribosome-bound tRNAs. This Sulfolobus acidocaldarius (strain ATCC 33909 / DSM 639 / JCM 8929 / NBRC 15157 / NCIMB 11770) protein is Large ribosomal subunit protein uL5.